The chain runs to 463 residues: ATP synthase subunit beta (463 aa).

Residue 151 to 158 (GGAGVGKT) coordinates ATP.

Belongs to the ATPase alpha/beta chains family. F-type ATPases have 2 components, CF(1) - the catalytic core - and CF(0) - the membrane proton channel. CF(1) has five subunits: alpha(3), beta(3), gamma(1), delta(1), epsilon(1). CF(0) has three main subunits: a(1), b(2) and c(9-12). The alpha and beta chains form an alternating ring which encloses part of the gamma chain. CF(1) is attached to CF(0) by a central stalk formed by the gamma and epsilon chains, while a peripheral stalk is formed by the delta and b chains.

Its subcellular location is the cell membrane. The enzyme catalyses ATP + H2O + 4 H(+)(in) = ADP + phosphate + 5 H(+)(out). In terms of biological role, produces ATP from ADP in the presence of a proton gradient across the membrane. The catalytic sites are hosted primarily by the beta subunits. The sequence is that of ATP synthase subunit beta from Clostridium botulinum (strain Loch Maree / Type A3).